We begin with the raw amino-acid sequence, 489 residues long: Dipeptide and tripeptide permease B (489 aa).

Topologically, residues 1-27 are cytoplasmic; it reads MNTTTPMGMLQQPRPFFMIFFVELWER. The chain crosses the membrane as a helical span at residues 28–48; that stretch reads FGYYGVQGVLAVFFVKQLGFS. Residues 49 to 52 lie on the Periplasmic side of the membrane; sequence QEQA. The chain crosses the membrane as a helical span at residues 53–73; that stretch reads FVTFGAFAALVYGLISIGGYV. Topologically, residues 74 to 82 are cytoplasmic; the sequence is GDHLLGTKR. Residues 83 to 103 traverse the membrane as a helical segment; that stretch reads TIVLGALVLAIGYFMTGLSLL. The Periplasmic portion of the chain corresponds to 104-106; the sequence is KPD. Residues 107–127 form a helical membrane-spanning segment; that stretch reads LIFIALGTIAVGNGLFKANPA. Over 128–146 the chain is Cytoplasmic; it reads SLLSKCYPPKAPRLDGAFT. A helical membrane pass occupies residues 147-167; that stretch reads LFYMSINIGSLIALSLAPVIA. Over 168-172 the chain is Periplasmic; that stretch reads DRFGY. The chain crosses the membrane as a helical span at residues 173-193; the sequence is SVTYNLCGAGLIIALLVYIAC. The Cytoplasmic segment spans residues 194 to 210; sequence RGMVKDIGSEPDFRPMS. The helical transmembrane segment at 211-231 threads the bilayer; sequence FSKLLYVLLGSVVMIFVCAWL. Residues 232–233 lie on the Periplasmic side of the membrane; sequence MH. The helical transmembrane segment at 234–254 threads the bilayer; that stretch reads NVEVANLVLIVLSIVVTIIFF. The Cytoplasmic segment spans residues 255–267; sequence RQAFKLDKTGRNK. A helical transmembrane segment spans residues 268–288; it reads MFVAFVLMLEAVVFYILYAQM. Topologically, residues 289–311 are periplasmic; sequence PTSLNFFAINNVHHEILGFSINP. The helical transmembrane segment at 312–332 threads the bilayer; that stretch reads VSFQALNPFWVVLASPILAGI. Residues 333-350 are Cytoplasmic-facing; sequence YTHLGSKGKDLSMPMKFT. A helical transmembrane segment spans residues 351-371; it reads LGMFMCSLGFLTAAAAGMWFA. Topologically, residues 372–380 are periplasmic; the sequence is DAQGLTSPW. Residues 381–401 form a helical membrane-spanning segment; it reads FIVLVYLFQSLGELFISALGL. Over 402 to 411 the chain is Cytoplasmic; sequence AMVAALVPQH. A helical transmembrane segment spans residues 412–432; it reads LMGFILGISFLTQAAAFLLGG. The Periplasmic portion of the chain corresponds to 433 to 456; sequence YVATFTAVPDNITDPLETLPVYTN. The helical transmembrane segment at 457–477 threads the bilayer; it reads VFGKIGLVTLGVAVVMLLMVP. Residues 478–489 are Cytoplasmic-facing; sequence WLKRMIAAPESH.

This sequence belongs to the major facilitator superfamily. Proton-dependent oligopeptide transporter (POT/PTR) (TC 2.A.17) family. DtpB subfamily.

The protein resides in the cell inner membrane. Its function is as follows. Proton-dependent permease that transports di- and tripeptides. The sequence is that of Dipeptide and tripeptide permease B from Shigella dysenteriae serotype 1 (strain Sd197).